We begin with the raw amino-acid sequence, 209 residues long: A-type ATP synthase subunit D (209 aa).

This sequence belongs to the V-ATPase D subunit family. Has multiple subunits with at least A(3), B(3), C, D, E, F, H, I and proteolipid K(x).

Its subcellular location is the cell membrane. Functionally, component of the A-type ATP synthase that produces ATP from ADP in the presence of a proton gradient across the membrane. This is A-type ATP synthase subunit D from Thermoplasma volcanium (strain ATCC 51530 / DSM 4299 / JCM 9571 / NBRC 15438 / GSS1).